Here is a 341-residue protein sequence, read N- to C-terminus: UDP-3-O-(3-hydroxymyristoyl)glucosamine N-acyltransferase (341 aa).

Catalysis depends on H239, which acts as the Proton acceptor.

This sequence belongs to the transferase hexapeptide repeat family. LpxD subfamily. Homotrimer.

It carries out the reaction a UDP-3-O-[(3R)-3-hydroxyacyl]-alpha-D-glucosamine + a (3R)-hydroxyacyl-[ACP] = a UDP-2-N,3-O-bis[(3R)-3-hydroxyacyl]-alpha-D-glucosamine + holo-[ACP] + H(+). The catalysed reaction is UDP-3-O-[(3R)-3-hydroxytetradecanoyl]-alpha-D-glucosamine + (3R)-hydroxytetradecanoyl-[ACP] = UDP-2-N,3-O-bis[(3R)-3-hydroxytetradecanoyl]-alpha-D-glucosamine + holo-[ACP] + H(+). It participates in glycolipid biosynthesis; lipid IV(A) biosynthesis; lipid IV(A) from (3R)-3-hydroxytetradecanoyl-[acyl-carrier-protein] and UDP-N-acetyl-alpha-D-glucosamine: step 3/6. In terms of biological role, catalyzes the N-acylation of UDP-3-O-(hydroxytetradecanoyl)glucosamine using 3-hydroxytetradecanoyl-ACP as the acyl donor. Is involved in the biosynthesis of lipid A, a phosphorylated glycolipid that anchors the lipopolysaccharide to the outer membrane of the cell. In Shigella dysenteriae serotype 1 (strain Sd197), this protein is UDP-3-O-(3-hydroxymyristoyl)glucosamine N-acyltransferase.